We begin with the raw amino-acid sequence, 202 residues long: Na(+)-translocating NADH-quinone reductase subunit E (202 aa).

6 consecutive transmembrane segments (helical) span residues 11–31, 35–55, 81–101, 114–134, 144–164, and 180–200; these read SVFI…FIAI, VETA…TVPA, FLGF…LEML, GIYL…LFMV, VVYG…LAGI, and LGIA…FSGI.

This sequence belongs to the NqrDE/RnfAE family. Composed of six subunits; NqrA, NqrB, NqrC, NqrD, NqrE and NqrF.

It localises to the cell inner membrane. It catalyses the reaction a ubiquinone + n Na(+)(in) + NADH + H(+) = a ubiquinol + n Na(+)(out) + NAD(+). Functionally, NQR complex catalyzes the reduction of ubiquinone-1 to ubiquinol by two successive reactions, coupled with the transport of Na(+) ions from the cytoplasm to the periplasm. NqrA to NqrE are probably involved in the second step, the conversion of ubisemiquinone to ubiquinol. In Azotobacter vinelandii (strain DJ / ATCC BAA-1303), this protein is Na(+)-translocating NADH-quinone reductase subunit E.